A 435-amino-acid chain; its full sequence is Putative GMP synthase [glutamine-hydrolyzing] 2 (435 aa).

A Glutamine amidotransferase type-1; truncated domain is found at 1–120 (MKQDMIVILD…VFDTCQAEAN (120 aa)). In terms of domain architecture, GMPS ATP-PPase spans 121-310 (WNMANFVNDQ…LGLPYEMVYR (190 aa)). 148 to 154 (SGGVDSS) provides a ligand contact to ATP.

Homodimer.

The enzyme catalyses XMP + L-glutamine + ATP + H2O = GMP + L-glutamate + AMP + diphosphate + 2 H(+). It participates in purine metabolism; GMP biosynthesis; GMP from XMP (L-Gln route): step 1/1. Catalyzes the synthesis of GMP from XMP. The protein is Putative GMP synthase [glutamine-hydrolyzing] 2 (guaA2) of Bacteroides thetaiotaomicron (strain ATCC 29148 / DSM 2079 / JCM 5827 / CCUG 10774 / NCTC 10582 / VPI-5482 / E50).